Here is a 223-residue protein sequence, read N- to C-terminus: Large ribosomal subunit protein uL3 (223 aa).

The protein belongs to the universal ribosomal protein uL3 family. As to quaternary structure, part of the 50S ribosomal subunit. Forms a cluster with proteins L14 and L19.

Its function is as follows. One of the primary rRNA binding proteins, it binds directly near the 3'-end of the 23S rRNA, where it nucleates assembly of the 50S subunit. This Cutibacterium acnes (strain DSM 16379 / KPA171202) (Propionibacterium acnes) protein is Large ribosomal subunit protein uL3.